A 145-amino-acid chain; its full sequence is ATP synthase epsilon chain (145 aa).

A disordered region spans residues 100-123 (RAQRAKQRAEDAIKTASEKHDSDE). The segment covering 106–123 (QRAEDAIKTASEKHDSDE) has biased composition (basic and acidic residues).

This sequence belongs to the ATPase epsilon chain family. As to quaternary structure, F-type ATPases have 2 components, CF(1) - the catalytic core - and CF(0) - the membrane proton channel. CF(1) has five subunits: alpha(3), beta(3), gamma(1), delta(1), epsilon(1). CF(0) has three main subunits: a, b and c.

The protein localises to the cell membrane. Produces ATP from ADP in the presence of a proton gradient across the membrane. In Latilactobacillus sakei subsp. sakei (strain 23K) (Lactobacillus sakei subsp. sakei), this protein is ATP synthase epsilon chain.